Reading from the N-terminus, the 278-residue chain is Protein canopy homolog 3 (278 aa).

Residues 1–30 (MDSMPEPASRCLLLLPLLLLLLLLLPAPEL) form the signal peptide. Residues 47–271 (SKCEVCKYVA…EGIQKASPLT (225 aa)) form the Saposin B-type domain. Cystine bridges form between Cys-49–Cys-206, Cys-52–Cys-194, and Cys-104–Cys-166. N-linked (GlcNAc...) asparagine glycosylation occurs at Asn-153. Positions 153–179 (NETSAEVADLKKQCDVLVEEFEEVIED) form a coiled coil. The interval 215–278 (KGDTAALGGK…PLTHSPPDEL (64 aa)) is disordered. Positions 233–243 (AKAAGGRSSSS) are enriched in low complexity.

The protein belongs to the canopy family. Interacts with HSP90B1; this interaction is disrupted in the presence of ATP. Interacts with TLR1, TLR2, TLR4 and TLR9. Strongest interaction with TLR4.

The protein localises to the endoplasmic reticulum. Toll-like receptor (TLR)-specific co-chaperone for HSP90B1. Required for proper TLR folding, except that of TLR3, and hence controls TLR exit from the endoplasmic reticulum. Consequently, required for both innate and adaptive immune responses. The sequence is that of Protein canopy homolog 3 (CNPY3) from Homo sapiens (Human).